Reading from the N-terminus, the 310-residue chain is Methionyl-tRNA formyltransferase (310 aa).

110–113 is a (6S)-5,6,7,8-tetrahydrofolate binding site; that stretch reads SLLP.

This sequence belongs to the Fmt family.

It catalyses the reaction L-methionyl-tRNA(fMet) + (6R)-10-formyltetrahydrofolate = N-formyl-L-methionyl-tRNA(fMet) + (6S)-5,6,7,8-tetrahydrofolate + H(+). In terms of biological role, attaches a formyl group to the free amino group of methionyl-tRNA(fMet). The formyl group appears to play a dual role in the initiator identity of N-formylmethionyl-tRNA by promoting its recognition by IF2 and preventing the misappropriation of this tRNA by the elongation apparatus. The protein is Methionyl-tRNA formyltransferase of Streptomyces griseus subsp. griseus (strain JCM 4626 / CBS 651.72 / NBRC 13350 / KCC S-0626 / ISP 5235).